The sequence spans 193 residues: dCTP deaminase (193 aa).

Residues 110 to 115 (RSSLAR), Asp-128, 136 to 138 (VLE), Tyr-171, Lys-178, and Gln-182 contribute to the dCTP site. The active-site Proton donor/acceptor is Glu-138. A disordered region spans residues 168 to 193 (DRPYNRRQDAKYKNQQGAVSSRIDED). Basic and acidic residues predominate over residues 170–179 (PYNRRQDAKY).

It belongs to the dCTP deaminase family. Homotrimer.

It catalyses the reaction dCTP + H2O + H(+) = dUTP + NH4(+). Its pathway is pyrimidine metabolism; dUMP biosynthesis; dUMP from dCTP (dUTP route): step 1/2. Functionally, catalyzes the deamination of dCTP to dUTP. This is dCTP deaminase from Photorhabdus laumondii subsp. laumondii (strain DSM 15139 / CIP 105565 / TT01) (Photorhabdus luminescens subsp. laumondii).